A 124-amino-acid chain; its full sequence is 14 kDa peptide of ubiquinol-cytochrome c2 oxidoreductase complex (124 aa).

Residues 85-102 (LGGFASGALLALALAGIF) traverse the membrane as a helical segment.

The protein resides in the cell inner membrane. Its function is as follows. Component of the ubiquinol-cytochrome c reductase complex (complex III or cytochrome b-c1 complex), which is a respiratory chain that generates an electrochemical potential coupled to ATP synthesis. This Cereibacter sphaeroides (Rhodobacter sphaeroides) protein is 14 kDa peptide of ubiquinol-cytochrome c2 oxidoreductase complex.